The sequence spans 368 residues: Divinyl chlorophyll a/b light-harvesting protein PcbA (368 aa).

6 helical membrane passes run 27–47 (FIAS…ANTL), 63–83 (GFVV…NGVI), 89–109 (MLVV…GAML), 203–223 (VMGG…WHIF), 243–263 (FVLS…AFWA), and 307–327 (LSNF…WHGL).

Belongs to the PsbB/PsbC family. IsiA/Pcb subfamily. As to quaternary structure, the antenna complex consists of divinyl chlorophylls (a and b) and divinyl chlorophyll a/b binding proteins. Forms complexes with PSII, consisting of a PSII dimer and 4 or 8 PcbA subunits. These complexes are also found under conditions of iron-starvation. Divinyl chlorophyll a is required as a cofactor. The cofactor is divinyl chlorophyll b.

The protein localises to the cellular thylakoid membrane. In terms of biological role, the antenna complex functions as a light receptor, it captures and delivers excitation energy to photosystems II. The Prochlorales pcb genes are not related to higher plant LHCs. The protein is Divinyl chlorophyll a/b light-harvesting protein PcbA (pcbA) of Prochlorococcus marinus (strain MIT 9313).